The chain runs to 655 residues: Macrolide export ATP-binding/permease protein MacB (655 aa).

Residues Ile6–Gln244 form the ABC transporter domain. Gly42 to Ser49 provides a ligand contact to ATP. 4 helical membrane-spanning segments follow: residues Phe279–Gly299, Leu528–Met548, Phe579–Tyr599, and Ala618–Leu638.

This sequence belongs to the ABC transporter superfamily. Macrolide exporter (TC 3.A.1.122) family. Homodimer.

The protein localises to the cell inner membrane. In terms of biological role, non-canonical ABC transporter that contains transmembrane domains (TMD), which form a pore in the inner membrane, and an ATP-binding domain (NBD), which is responsible for energy generation. Confers resistance against macrolides. The polypeptide is Macrolide export ATP-binding/permease protein MacB (Rhodopseudomonas palustris (strain BisB18)).